Reading from the N-terminus, the 516-residue chain is uncharacterized protein (516 aa).

PFTB repeat units lie at residues 45–86 (RQDA…QRAD) and 401–443 (DERA…DGSE).

This is an uncharacterized protein from Sinorhizobium fredii (strain NBRC 101917 / NGR234).